The sequence spans 124 residues: UPF0102 protein Mmc1_3298 (124 aa).

It belongs to the UPF0102 family.

This Magnetococcus marinus (strain ATCC BAA-1437 / JCM 17883 / MC-1) protein is UPF0102 protein Mmc1_3298.